We begin with the raw amino-acid sequence, 791 residues long: Cytochrome c oxidase polypeptide I+III (791 aa).

The tract at residues 1–473 is COX1; sequence MAITAKPKAG…LLSTIGAYIL (473 aa). A helical membrane pass occupies residues 29-49; that stretch reads LMYTATAFFAFALAGVFSLLI. Histidine 73 serves as a coordination point for Fe(II)-heme a. Transmembrane regions (helical) follow at residues 78–98, 111–131, 155–175, 201–221, 244–264, 282–302, 312–332, 347–367, 381–401, 423–443, 464–484, 566–586, 617–637, 657–677, 691–711, 729–749, and 771–791; these read LFFF…VPLM, AFSY…YFFP, FYLA…ANFV, ASVL…LVLL, FFWF…LGIL, MVWA…HHMF, IAFA…LFNI, LYWV…GVML, FVVA…AFAG, FWLF…LGYL, LLST…IYTM, FAFF…WVFL, AWMG…ILIA, LWLA…VHFA, FGLL…SWEF, FFTI…GLIL, and SMYW…FYVW. Cu cation contacts are provided by histidine 250, tyrosine 254, histidine 299, and histidine 300. Positions 250–254 form a cross-link, 1'-histidyl-3'-tyrosine (His-Tyr); it reads HPTVY. Heme a3 is bound at residue histidine 385. Histidine 387 contacts Fe(II)-heme a. The segment at 545 to 791 is COX3; the sequence is DPAHIHLPNS…LVIVTIFYVW (247 aa).

It in the N-terminal section; belongs to the heme-copper respiratory oxidase family. This sequence in the C-terminal section; belongs to the cytochrome c oxidase subunit 3 family. Possibly a heterodimer of A-protein (contains: cytochrome c oxidase subunits I and III) and subunit II. The A-protein could also present a precursor form of subunits I and III. Cu(2+) serves as cofactor. It depends on heme as a cofactor.

The protein localises to the cell membrane. The enzyme catalyses 4 Fe(II)-[cytochrome c] + O2 + 8 H(+)(in) = 4 Fe(III)-[cytochrome c] + 2 H2O + 4 H(+)(out). It participates in energy metabolism; oxidative phosphorylation. Functionally, cytochrome c oxidase is the component of the respiratory chain that catalyzes the reduction of oxygen to water. Subunits 1-3 form the functional core of the enzyme complex. Co I is the catalytic subunit of the enzyme. Electrons originating in cytochrome c are transferred via the copper A center of subunit 2 and heme a of subunit 1 to the bimetallic center formed by heme a3 and copper B. This cytochrome c oxidase shows proton pump activity across the membrane in addition to the electron transfer. The chain is Cytochrome c oxidase polypeptide I+III (caaA) from Thermus thermophilus (strain ATCC 27634 / DSM 579 / HB8).